Reading from the N-terminus, the 594-residue chain is APOBEC1 complementation factor (594 aa).

RRM domains follow at residues 56–134, 136–218, and 231–303; these read CEIF…ASVD, CRLF…WAEP, and KILY…LAKP. The segment at 359–408 is required for nuclear localization; the sequence is HFPATKGHLSNRALIRTPSVREIYMNVPVGAAGVRGLGGRGYLAYTGLGR. A Phosphothreonine modification is found at Thr498.

As to quaternary structure, part of the apolipoprotein B mRNA editing complex with APOBEC1. Interacts with TNPO2; TNPO2 may be responsible for transport of A1CF into the nucleus. Interacts with SYNCRIP. Interacts with CELF2/CUGBP2. Interacts with RBM47. Isoforms 1 and 2 are widely expressed while isoforms 3 and 4 are restricted to liver and small intestine.

It is found in the nucleus. The protein localises to the endoplasmic reticulum. The protein resides in the cytoplasm. Functionally, essential component of the apolipoprotein B mRNA editing enzyme complex which is responsible for the postranscriptional editing of a CAA codon for Gln to a UAA codon for stop in APOB mRNA. Binds to APOB mRNA and is probably responsible for docking the catalytic subunit, APOBEC1, to the mRNA to allow it to deaminate its target cytosine. The complex also seems to protect the edited APOB mRNA from nonsense-mediated decay. In Rattus norvegicus (Rat), this protein is APOBEC1 complementation factor (A1cf).